Reading from the N-terminus, the 362-residue chain is Aminomethyltransferase (362 aa).

Belongs to the GcvT family. The glycine cleavage system is composed of four proteins: P, T, L and H.

It catalyses the reaction N(6)-[(R)-S(8)-aminomethyldihydrolipoyl]-L-lysyl-[protein] + (6S)-5,6,7,8-tetrahydrofolate = N(6)-[(R)-dihydrolipoyl]-L-lysyl-[protein] + (6R)-5,10-methylene-5,6,7,8-tetrahydrofolate + NH4(+). Its function is as follows. The glycine cleavage system catalyzes the degradation of glycine. In Chloroherpeton thalassium (strain ATCC 35110 / GB-78), this protein is Aminomethyltransferase.